Consider the following 287-residue polypeptide: MLYFLPTPIGNLADITLRALEVLERCEVFLCEDTRVSKRLLHLLAQNPIISHSFPNIATKKREFIAFHSHNDQEFLNQIKPSFFDKEIAVMSDAGMPSLSDPGMSLAAYALKHNIQYDVLPGANALTTAFCASGFLEGRFFYAGFLPHKSKERRLKIAKILNALAYLEEKTPVVFYESPHRLLETLKDLNDLAKGMHLFAAKELTKLHQQYYLGEVSQIIERLQQSTIQGEWVLVLLNEKKIEPCMGLSALLELDLPPKIKAKIEAVMTQKNAKELYFQRLLEEKNQ.

Belongs to the methyltransferase superfamily. RsmI family.

It is found in the cytoplasm. The enzyme catalyses cytidine(1402) in 16S rRNA + S-adenosyl-L-methionine = 2'-O-methylcytidine(1402) in 16S rRNA + S-adenosyl-L-homocysteine + H(+). In terms of biological role, catalyzes the 2'-O-methylation of the ribose of cytidine 1402 (C1402) in 16S rRNA. The protein is Ribosomal RNA small subunit methyltransferase I of Helicobacter pylori (strain ATCC 700392 / 26695) (Campylobacter pylori).